Here is a 431-residue protein sequence, read N- to C-terminus: Female gametocyte surface protein P47 (431 aa).

Positions 1–20 are cleaved as a signal peptide; it reads MKGFTGASIIVFYLIKGYLS. Residues 26–178 form the 6-Cys 1 domain; sequence NGYVCDFKFN…GLVKIILNNQ (153 aa). 3 disulfides stabilise this stretch: Cys30/Cys55, Cys70/Cys145, and Cys88/Cys143. A glycan (N-linked (GlcNAc...) asparagine) is linked at Asn45. The N-linked (GlcNAc...) asparagine glycan is linked to Asn239. The 6-Cys 2 domain maps to 278–413; sequence NIDGCDFTVP…MELKISSSKN (136 aa). Disulfide bonds link Cys282–Cys309, Cys326–Cys395, and Cys335–Cys393. Ser409 carries GPI-anchor amidated serine lipidation. Positions 410-431 are cleaved as a propeptide — removed in mature form; that stretch reads SSKNIFISFILLSIIVSIFYLF.

It is found in the cell surface. It localises to the cell membrane. In terms of biological role, required for female fertility. In Plasmodium berghei (strain Anka), this protein is Female gametocyte surface protein P47 (PB47).